Consider the following 141-residue polypeptide: Ribosomal RNA large subunit methyltransferase H (141 aa).

Gly88 is an S-adenosyl-L-methionine binding site.

The protein belongs to the RNA methyltransferase RlmH family. In terms of assembly, homodimer.

The protein localises to the cytoplasm. The catalysed reaction is pseudouridine(1915) in 23S rRNA + S-adenosyl-L-methionine = N(3)-methylpseudouridine(1915) in 23S rRNA + S-adenosyl-L-homocysteine + H(+). Specifically methylates the pseudouridine at position 1915 (m3Psi1915) in 23S rRNA. The chain is Ribosomal RNA large subunit methyltransferase H from Novosphingobium aromaticivorans (strain ATCC 700278 / DSM 12444 / CCUG 56034 / CIP 105152 / NBRC 16084 / F199).